The chain runs to 484 residues: Dolichyl-P-Man:Man5GlcNAc2-PP-dolichol alpha-1,3-mannosyltransferase l(2)not2 (484 aa).

At 1–43 (MAPPKAASHRPAVRRKKSGTLVDSILDKYLNVRFFKYLLLEPA) the chain is on the cytoplasmic side. A helical membrane pass occupies residues 44–64 (ALPIVGLFVLLAELVINVVVI). Over 65-97 (QRVPYTEIDWVAYMQECEGFLNGTTNYSLLRGD) the chain is Lumenal. Residues 98–118 (TGPLVYPAAFVYIYSALYYVT) form a helical membrane-spanning segment. The Cytoplasmic portion of the chain corresponds to 119–125 (SHGTNVR). A helical transmembrane segment spans residues 126 to 146 (LAQYIFAGIYLLQLALVLRLY). At 147 to 171 (SKSRKVPPYVLVLSAFTSYRIHSIY) the chain is on the lumenal side. Residues 172–192 (VLRLFNDPVAVLLLYAALNLF) form a helical membrane-spanning segment. Topologically, residues 193–211 (LDRRWTLGSTFFSLAVGVK) are cytoplasmic. Residues 212-232 (MNILLFAPALLLFYLANLGLL) traverse the membrane as a helical segment. Arg-233 is a topological domain (lumenal). Residues 234–254 (TILQLAVCGVIQLLLGAPFLL) form a helical membrane-spanning segment. Residues 255 to 294 (THPVEYLRGSFDLGRIFEHKWTVNYRFLSRDVFENRTFHV) lie on the Cytoplasmic side of the membrane. A helical transmembrane segment spans residues 295–315 (SLLGLHLLLLLAFAKPTWTFF). At 316–403 (QSYVRLRRIE…YGIHFDRCTQ (88 aa)) the chain is on the lumenal side. The helical transmembrane segment at 404–424 (LALLPFFLCNLVGVACSRSLH) threads the bilayer. The Cytoplasmic segment spans residues 425–426 (YQ). A helical transmembrane segment spans residues 427-447 (FYVWYFHSLPYLAWSTPYSLG). Residues 448 to 484 (VRCLILGLIEYCWNTYPSTNFSSAALHFTHIIPPYQL) are Lumenal-facing.

Belongs to the glycosyltransferase ALG3 family.

It is found in the endoplasmic reticulum membrane. The enzyme catalyses an alpha-D-Man-(1-&gt;2)-alpha-D-Man-(1-&gt;2)-alpha-D-Man-(1-&gt;3)-[alpha-D-Man-(1-&gt;6)]-beta-D-Man-(1-&gt;4)-beta-D-GlcNAc-(1-&gt;4)-alpha-D-GlcNAc-diphospho-di-trans,poly-cis-dolichol + a di-trans,poly-cis-dolichyl beta-D-mannosyl phosphate = an alpha-D-Man-(1-&gt;2)-alpha-D-Man-(1-&gt;2)-alpha-D-Man-(1-&gt;3)-[alpha-D-Man-(1-&gt;3)-alpha-D-Man-(1-&gt;6)]-beta-D-Man-(1-&gt;4)-beta-D-GlcNAc-(1-&gt;4)-alpha-D-GlcNAc-diphospho-di-trans,poly-cis-dolichol + a di-trans,poly-cis-dolichyl phosphate + H(+). Its pathway is protein modification; protein glycosylation. In terms of biological role, probable alpha-1,3-mannosyltransferase involved in the N-glycosylation pathway. Involved in glycosylation of the TNF receptor grnd, regulating its ligand affinity. Required for normal epithelial growth and architecture. Suppressor of JNK-dependent intestinal stem cell proliferation. The protein is Dolichyl-P-Man:Man5GlcNAc2-PP-dolichol alpha-1,3-mannosyltransferase l(2)not2 of Drosophila melanogaster (Fruit fly).